The chain runs to 84 residues: UPF0410 protein YmgE (84 aa).

Helical transmembrane passes span Met-1 to Met-21, Gly-27 to Ala-47, and Gly-58 to Phe-78.

This sequence belongs to the UPF0410 family.

It is found in the cell inner membrane. The chain is UPF0410 protein YmgE (ymgE) from Escherichia coli O127:H6 (strain E2348/69 / EPEC).